Reading from the N-terminus, the 218-residue chain is Ribose-5-phosphate isomerase A (218 aa).

Residues 28 to 31 (TGST), 81 to 84 (DGAD), and 94 to 97 (KGGG) contribute to the substrate site. E103 serves as the catalytic Proton acceptor. Residue K121 coordinates substrate.

This sequence belongs to the ribose 5-phosphate isomerase family. As to quaternary structure, homodimer.

It carries out the reaction aldehydo-D-ribose 5-phosphate = D-ribulose 5-phosphate. It functions in the pathway carbohydrate degradation; pentose phosphate pathway; D-ribose 5-phosphate from D-ribulose 5-phosphate (non-oxidative stage): step 1/1. Functionally, catalyzes the reversible conversion of ribose-5-phosphate to ribulose 5-phosphate. This Methylococcus capsulatus (strain ATCC 33009 / NCIMB 11132 / Bath) protein is Ribose-5-phosphate isomerase A.